Here is a 392-residue protein sequence, read N- to C-terminus: Putative glutamate--cysteine ligase 2 (392 aa).

The interval 1–21 (MMPVSGWRAVSSAPASSSAGR) is disordered. A compositionally biased stretch (low complexity) spans 9-19 (AVSSAPASSSA).

Belongs to the glutamate--cysteine ligase type 2 family. YbdK subfamily.

It catalyses the reaction L-cysteine + L-glutamate + ATP = gamma-L-glutamyl-L-cysteine + ADP + phosphate + H(+). ATP-dependent carboxylate-amine ligase which exhibits weak glutamate--cysteine ligase activity. This chain is Putative glutamate--cysteine ligase 2, found in Mycobacterium ulcerans (strain Agy99).